The chain runs to 88 residues: MAKEKFNLQDRFLNILRTKKIEVKVYLVNGFQTKGIVRSFDNFTVLIESGKQQTLIYKHAISTILPAEYIMLMKTEEEQQEQQEAEQE.

The region spanning 10–70 (DRFLNILRTK…ISTILPAEYI (61 aa)) is the Sm domain.

This sequence belongs to the Hfq family. Homohexamer.

Functionally, RNA chaperone that binds small regulatory RNA (sRNAs) and mRNAs to facilitate mRNA translational regulation in response to envelope stress, environmental stress and changes in metabolite concentrations. Also binds with high specificity to tRNAs. This Fervidobacterium nodosum (strain ATCC 35602 / DSM 5306 / Rt17-B1) protein is RNA-binding protein Hfq.